Here is a 75-residue protein sequence, read N- to C-terminus: Pi-hexatoxin-Hi1b (75 aa).

6 disulfides stabilise this stretch: Cys3/Cys18, Cys10/Cys23, Cys17/Cys33, Cys40/Cys55, Cys47/Cys60, and Cys54/Cys71. 2 Domain repeats span residues 3 to 33 (CIRK…FEVC) and 40 to 71 (CLVK…SSVC). Residues 3–71 (CIRKWLSCVD…KRSGNKSSVC (69 aa)) are 2 X approximate repeats with cysteine pattern C-C-CC-C-C.

The protein belongs to the psalmotoxin-1 family. Double-knot toxin subfamily. Expressed by the venom gland.

The protein resides in the secreted. Functionally, this toxin potently and selectively inhibits ASIC1a, an isoform of the gene ASIC1. It incompletely inhibits ASIC1a activation in a pH-independent and slowly reversible manner. This toxin acts by binding to and stabilizing the closed state of the channel, thereby impeding the transition into a conducting state. This toxin may bind to the acidic pocket of ASIC1a, since mutation of a key residue of this pocket (Arg-350) abolishes the ability of the toxin to inhibit ASIC1a. In vivo, this toxin protects the brain from neuronal injury when administered up to 8 hours after stroke onset. This chain is Pi-hexatoxin-Hi1b, found in Hadronyche infensa (Fraser island funnel-web spider).